Reading from the N-terminus, the 103-residue chain is Small ribosomal subunit protein uS10 (103 aa).

The protein belongs to the universal ribosomal protein uS10 family. In terms of assembly, part of the 30S ribosomal subunit.

Its function is as follows. Involved in the binding of tRNA to the ribosomes. The polypeptide is Small ribosomal subunit protein uS10 (Shewanella amazonensis (strain ATCC BAA-1098 / SB2B)).